We begin with the raw amino-acid sequence, 225 residues long: MKHLFKLDPAKNLPTNDVTKLIHSGTDGFIIGGTDNVQIEAVQNLYELLVETDLPIFLEISNESMILPEADHFLIPVVLNTENSKWTHGLHKELIKEMGEFIPWKRVTSEGYVILNKDAKVAHLTEAKTDLTDEDIVAYARLAENIFHLPIFYVEYSGMYGDPEVVRKASAALSNTKFWYGGGIRSKEQAAEMAKYADTIIVGNIIYEDLEKALETATIFRKKTV.

K6 lines the sn-glycerol 1-phosphate pocket. D8 and T34 together coordinate Mg(2+). Sn-glycerol 1-phosphate contacts are provided by residues 153-158, G183, and 203-204; these read YVEYSG and GN.

This sequence belongs to the GGGP/HepGP synthase family. Group I subfamily. In terms of assembly, homodimer. The cofactor is Mg(2+).

The enzyme catalyses sn-glycerol 1-phosphate + all-trans-heptaprenyl diphosphate = 3-heptaprenyl-sn-glycero-1-phosphate + diphosphate. It functions in the pathway membrane lipid metabolism; glycerophospholipid metabolism. Prenyltransferase that catalyzes in vivo the transfer of the heptaprenyl moiety of heptaprenyl pyrophosphate (HepPP; 35 carbon atoms) to the C3 hydroxyl of sn-glycerol-1-phosphate (G1P), producing heptaprenylglyceryl phosphate (HepGP). This reaction is an ether-bond-formation step in the biosynthesis of archaea-type G1P-based membrane lipids found in Bacillales. To a much lesser extent, is also able to use geranylgeranyl diphosphate (GGPP; C20) as the prenyl donor. The sequence is that of Heptaprenylglyceryl phosphate synthase from Listeria monocytogenes serovar 1/2a (strain ATCC BAA-679 / EGD-e).